Here is a 312-residue protein sequence, read N- to C-terminus: MGVHLEVLDTGEQLMVPGDVLEEENKGTLWKFLLSGAMAGAVSRTGTAPLDRARVYMQVYSSKSNFRHLLSGLRSLVQEGGIRSLWRGNGINVLKIAPEYAIKFSVFEQSRNFFYGVHTSPSFQERVVAGSLAVAISQTLINPMEVLKTRLTLRFTGQYKGLLDCARQILERDGTRALYRGYLPNMLGIIPYACTDLAVYELLRCLWQKSGRDMKDPSGLVSLSSVTLSTTCGQMASYPLTLVRTRMQAQDTVEGSNPTMLGVFKRILNQQGWPGLYRGMTPTLLKVLPAGGISYLVYEAMKKTLGVQVLSR.

3 Solcar repeats span residues 27 to 113 (GTLW…SRNF), 121 to 206 (PSFQ…LRCL), and 217 to 304 (PSGL…MKKT). 6 helical membrane-spanning segments follow: residues 33–50 (LLSG…TAPL), 88–107 (GNGI…FSVF), 131–144 (SLAV…INPM), 182–200 (YLPN…LAVY), 219–243 (GLVS…LTLV), and 279–298 (GMTP…YLVY).

This sequence belongs to the mitochondrial carrier (TC 2.A.29) family. Mainly expressed in testis and at lesser levels in brain.

It localises to the mitochondrion inner membrane. It carries out the reaction Mg(2+)(out) + phosphate(in) + ATP(out) = Mg(2+)(in) + phosphate(out) + ATP(in). The catalysed reaction is ADP(out) + phosphate(in) + H(+)(out) = ADP(in) + phosphate(out) + H(+)(in). In terms of biological role, calcium-independent ATP-Mg/Pi exchanger that catalyzes the electroneutral exchange of Mg-ATP or free ADP against an hydrogenphosphate and participates in the net transport of adenine nucleotides across the mitochondria inner membrane. The protein is Calcium-independent mitochondrial carrier protein SCaMC-3L of Rattus norvegicus (Rat).